Consider the following 260-residue polypeptide: uncharacterized protein (260 aa).

Residues 1–22 form the signal peptide; it reads MGYLKGFALYISILILIVFIAG. A lipid anchor (N-palmitoyl cysteine) is attached at Cys-23. A lipid anchor (S-diacylglycerol cysteine) is attached at Cys-23.

It belongs to the staphylococcal tandem lipoprotein family.

Its subcellular location is the cell membrane. This is an uncharacterized protein from Staphylococcus aureus (strain MSSA476).